Reading from the N-terminus, the 201-residue chain is MLAFTLRFIKNKRYFAILAGALVIIAGLASQHAWSGNGLPQINGKALAALAKQHPVVVLFRHAERCDRSDNTCLSDSTGITVNGAQDARALGKAFSADIQNYNLYSSNTVRTIQSATWFSAGRSLTADKKMMDCGSGIYASINTLLKKSQNKNIVIFTHNHCLTYIAKNKRGVKFDPDYLNALVMYAENGKLFLDGEFVPG.

The first 33 residues, 1–33 (MLAFTLRFIKNKRYFAILAGALVIIAGLASQHA), serve as a signal peptide directing secretion.

It belongs to the phosphoglycerate mutase family. Ais subfamily.

It localises to the periplasm. The protein operates within bacterial outer membrane biogenesis; lipopolysaccharide metabolism. Functionally, catalyzes the dephosphorylation of heptose(II) of the outer membrane lipopolysaccharide core. In Salmonella typhi, this protein is Lipopolysaccharide core heptose(II)-phosphate phosphatase.